A 318-amino-acid polypeptide reads, in one-letter code: Pantothenate kinase (318 aa).

96 to 103 lines the ATP pocket; the sequence is GSVSVGKS.

This sequence belongs to the prokaryotic pantothenate kinase family.

Its subcellular location is the cytoplasm. It catalyses the reaction (R)-pantothenate + ATP = (R)-4'-phosphopantothenate + ADP + H(+). Its pathway is cofactor biosynthesis; coenzyme A biosynthesis; CoA from (R)-pantothenate: step 1/5. This is Pantothenate kinase from Bradyrhizobium sp. (strain ORS 278).